The chain runs to 137 residues: Large ribosomal subunit protein uL16c (137 aa).

This sequence belongs to the universal ribosomal protein uL16 family. As to quaternary structure, part of the 50S ribosomal subunit.

It localises to the plastid. Its subcellular location is the chloroplast. The polypeptide is Large ribosomal subunit protein uL16c (Hordeum vulgare (Barley)).